The chain runs to 2353 residues: Nonribosomal peptide synthetase 7 (2353 aa).

The tract at residues 305 to 684 is adenylation 1; sequence TFSALNTRAN…AIEEVEDSAV (380 aa). Positions 776–853 constitute a Carrier 1 domain; sequence RDLTDSEKVV…QVAAAVQPQP (78 aa). An O-(pantetheine 4'-phosphoryl)serine modification is found at Ser813. Residues 885 to 1147 form a condensation 1 region; it reads EDAFPVTPFQ…LMVAPLRVKV (263 aa). Positions 1338–1725 are adenylation 2; it reads TYAGLAIKMN…QTNVFRQCAV (388 aa). One can recognise a Carrier 2 domain in the interval 1826 to 1902; the sequence is EICSEAEREL…EQAALMVQGQ (77 aa). Ser1863 bears the O-(pantetheine 4'-phosphoryl)serine mark. The condensation 2 stretch occupies residues 1939–2214; that stretch reads EDIYPCSPGQ…NGNCANFLPY (276 aa).

This sequence belongs to the NRP synthetase family.

Nonribosomal peptide synthesis (NRPS) is a key mechanism responsible for the biosynthesis of bioactive metabolites which are potentially contributing to organismal virulence. The sequence is that of Nonribosomal peptide synthetase 7 (NRPS7) from Aspergillus fumigatus (strain ATCC MYA-4609 / CBS 101355 / FGSC A1100 / Af293) (Neosartorya fumigata).